Here is a 95-residue protein sequence, read N- to C-terminus: UPF0298 protein LVIS_1401 (95 aa).

This sequence belongs to the UPF0298 family.

The protein resides in the cytoplasm. This Levilactobacillus brevis (strain ATCC 367 / BCRC 12310 / CIP 105137 / JCM 1170 / LMG 11437 / NCIMB 947 / NCTC 947) (Lactobacillus brevis) protein is UPF0298 protein LVIS_1401.